The following is an 83-amino-acid chain: Conotoxin LiCr95 (83 aa).

An N-terminal signal peptide occupies residues 1-22 (MKLTCALIVAMLFLTACQLTTT). A propeptide spanning residues 23–50 (DDSRGRQKYPTERLRVKMRNPKLSKLTK) is cleaved from the precursor. Cystine bridges form between cysteine 52/cysteine 67, cysteine 59/cysteine 71, and cysteine 66/cysteine 80.

It belongs to the conotoxin O1 superfamily. Expressed by the venom duct.

Its subcellular location is the secreted. In Conus lividus (Livid cone), this protein is Conotoxin LiCr95.